Reading from the N-terminus, the 138-residue chain is Small ribosomal subunit protein uS11c (138 aa).

The interval 1-24 (MAKSPPRSGSRRPGRIGSRKSGRR) is disordered. The segment covering 9-24 (GSRRPGRIGSRKSGRR) has biased composition (basic residues).

This sequence belongs to the universal ribosomal protein uS11 family. As to quaternary structure, part of the 30S ribosomal subunit.

Its subcellular location is the plastid. The protein localises to the chloroplast. The protein is Small ribosomal subunit protein uS11c of Citrus sinensis (Sweet orange).